The following is a 178-amino-acid chain: Sec-independent protein translocase protein TatB (178 aa).

A helical membrane pass occupies residues methionine 1 to glycine 21. The interval leucine 146–serine 178 is disordered. Over residues glutamate 168–serine 178 the composition is skewed to basic and acidic residues.

The protein belongs to the TatB family. In terms of assembly, the Tat system comprises two distinct complexes: a TatABC complex, containing multiple copies of TatA, TatB and TatC subunits, and a separate TatA complex, containing only TatA subunits. Substrates initially bind to the TatABC complex, which probably triggers association of the separate TatA complex to form the active translocon.

Its subcellular location is the cell inner membrane. Its function is as follows. Part of the twin-arginine translocation (Tat) system that transports large folded proteins containing a characteristic twin-arginine motif in their signal peptide across membranes. Together with TatC, TatB is part of a receptor directly interacting with Tat signal peptides. TatB may form an oligomeric binding site that transiently accommodates folded Tat precursor proteins before their translocation. The protein is Sec-independent protein translocase protein TatB of Bradyrhizobium sp. (strain ORS 278).